The following is a 348-amino-acid chain: MQLSDFNYELPPELIAQHPLANRTDSRLLEVRADGMNHAHLVDRQFKDILILAQPGDLLVFNDTKVIPARLHGKKETGGNVELLIERISGEKQAWVQIRASKVPKTGSTVHIYNQSGETFSVEMIGYDGRFYEVLFPDHVFSLLERFGKLPLPPYIEHQPDGEDAQRYQTVVAKNPGAVAAPTAGLHFDEVILQKLKDVGVNQATVTLHVGAGTFTPVREEDLSKHQMHYEWFSIPKETLQAIEKTKKNGGRIIAVGTTSLRALESQANSQQSSGETNLFITPGYQFKVVDCLLTNFHLPKSTLLMLVSAFAGVDNIRSAYQHAINQQYRFFSYGDAMFLCRLENIKP.

Belongs to the QueA family. In terms of assembly, monomer.

The protein resides in the cytoplasm. It carries out the reaction 7-aminomethyl-7-carbaguanosine(34) in tRNA + S-adenosyl-L-methionine = epoxyqueuosine(34) in tRNA + adenine + L-methionine + 2 H(+). Its pathway is tRNA modification; tRNA-queuosine biosynthesis. In terms of biological role, transfers and isomerizes the ribose moiety from AdoMet to the 7-aminomethyl group of 7-deazaguanine (preQ1-tRNA) to give epoxyqueuosine (oQ-tRNA). This Polynucleobacter asymbioticus (strain DSM 18221 / CIP 109841 / QLW-P1DMWA-1) (Polynucleobacter necessarius subsp. asymbioticus) protein is S-adenosylmethionine:tRNA ribosyltransferase-isomerase.